The primary structure comprises 209 residues: Thymidylate kinase (209 aa).

Position 10-17 (10-17) interacts with ATP; it reads GPDGAGKT.

The protein belongs to the thymidylate kinase family.

The enzyme catalyses dTMP + ATP = dTDP + ADP. Its function is as follows. Phosphorylation of dTMP to form dTDP in both de novo and salvage pathways of dTTP synthesis. In Pediococcus pentosaceus (strain ATCC 25745 / CCUG 21536 / LMG 10740 / 183-1w), this protein is Thymidylate kinase.